We begin with the raw amino-acid sequence, 362 residues long: Solute carrier family 25 member 3 (362 aa).

The transit peptide at methionine 1 to alanine 49 directs the protein to the mitochondrion. Residues alanine 50–arginine 63 are Mitochondrial intermembrane-facing. Solcar repeat units lie at residues arginine 63–leucine 147, tryptophan 160–alanine 244, and glutamate 261–tyrosine 339. Residues phenylalanine 64–leucine 86 traverse the membrane as a helical segment. Topologically, residues aspartate 87 to lysine 121 are mitochondrial matrix. N6-acetyllysine is present on lysine 99. Lysine 112 carries the N6-methyllysine modification. A helical transmembrane segment spans residues glycine 122 to tyrosine 141. At glutamate 142–arginine 161 the chain is on the mitochondrial intermembrane side. The chain crosses the membrane as a helical span at residues threonine 162–methionine 183. The Mitochondrial matrix portion of the chain corresponds to glutamate 184–lysine 218. Tyrosine 196 bears the Phosphotyrosine mark. An N6-acetyllysine modification is found at lysine 209. The helical transmembrane segment at glycine 219–phenylalanine 238 threads the bilayer. Residues glutamate 239–glutamate 261 are Mitochondrial intermembrane-facing. The chain crosses the membrane as a helical span at residues glutamine 262–alanine 284. Residues aspartate 285 to glycine 314 are Mitochondrial matrix-facing. Residues leucine 315–tyrosine 333 form a helical membrane-spanning segment. Residues aspartate 334–glutamine 362 are Mitochondrial intermembrane-facing.

Belongs to the mitochondrial carrier (TC 2.A.29) family. Interacts with PPIF; the interaction is impaired by CsA. In terms of tissue distribution, expressed in heart, diaphragm and skeletal muscle (at protein level). Not detected in liver, lung, brain, and kidney (at protein level). As to expression, ubiquitous (at protein level).

It localises to the mitochondrion inner membrane. The enzyme catalyses phosphate(in) + H(+)(in) = phosphate(out) + H(+)(out). Its activity is regulated as follows. Up-regulated in the presence of cardiolipin. In terms of biological role, inorganic ion transporter that transports phosphate or copper ions across the mitochondrial inner membrane into the matrix compartment. Mediates proton-coupled symport of phosphate ions necessary for mitochondrial oxidative phosphorylation of ADP to ATP. Transports copper ions probably in the form of anionic copper(I) complexes to maintain mitochondrial matrix copper pool and to supply copper for cytochrome C oxidase complex assembly. May also play a role in regulation of the mitochondrial permeability transition pore (mPTP). This chain is Solute carrier family 25 member 3, found in Bos taurus (Bovine).